A 511-amino-acid polypeptide reads, in one-letter code: Exodeoxyribonuclease 7 large subunit (511 aa).

This sequence belongs to the XseA family. As to quaternary structure, heterooligomer composed of large and small subunits.

The protein localises to the cytoplasm. It catalyses the reaction Exonucleolytic cleavage in either 5'- to 3'- or 3'- to 5'-direction to yield nucleoside 5'-phosphates.. Functionally, bidirectionally degrades single-stranded DNA into large acid-insoluble oligonucleotides, which are then degraded further into small acid-soluble oligonucleotides. This is Exodeoxyribonuclease 7 large subunit from Brucella melitensis biotype 2 (strain ATCC 23457).